The chain runs to 352 residues: Glycoprotein integral membrane protein 1 (352 aa).

The N-terminal stretch at 1 to 25 is a signal peptide; the sequence is MASRCKIHLTVAYLLILCILASAQS. Residues 26–281 lie on the Extracellular side of the membrane; sequence KQMTTETVVL…KLRRFLSDSV (256 aa). Residues asparagine 36, asparagine 44, asparagine 89, asparagine 109, asparagine 151, and asparagine 197 are each glycosylated (N-linked (GlcNAc...) asparagine). Residues 206–245 are disordered; it reads NSETTQEEIAAPGKLPETPLRMDPETLYESREEEERRSDS. Residues 225 to 244 are compositionally biased toward basic and acidic residues; that stretch reads LRMDPETLYESREEEERRSD. The chain crosses the membrane as a helical span at residues 282-302; sequence PLFFLVMWVVVVGVAGSAVVI. Residues 303–352 are Cytoplasmic-facing; sequence KILDLIFPSCEHRGFFHLNPETLMPDDEKVSLIDNMEGDMTEKSILLIEK.

The protein localises to the membrane. This is Glycoprotein integral membrane protein 1 (ginm1) from Danio rerio (Zebrafish).